The sequence spans 277 residues: NH(3)-dependent NAD(+) synthetase (277 aa).

46–53 provides a ligand contact to ATP; it reads GISGGQDS. Mg(2+) is bound at residue aspartate 52. Position 142 (arginine 142) interacts with deamido-NAD(+). Threonine 162 is a binding site for ATP. Glutamate 167 lines the Mg(2+) pocket. Lysine 175 and aspartate 182 together coordinate deamido-NAD(+). Lysine 191 and threonine 213 together coordinate ATP. 263–264 serves as a coordination point for deamido-NAD(+); that stretch reads HK.

Belongs to the NAD synthetase family. In terms of assembly, homodimer.

The catalysed reaction is deamido-NAD(+) + NH4(+) + ATP = AMP + diphosphate + NAD(+) + H(+). Its pathway is cofactor biosynthesis; NAD(+) biosynthesis; NAD(+) from deamido-NAD(+) (ammonia route): step 1/1. In terms of biological role, catalyzes the ATP-dependent amidation of deamido-NAD to form NAD. Uses ammonia as a nitrogen source. The protein is NH(3)-dependent NAD(+) synthetase of Corynebacterium glutamicum (strain ATCC 13032 / DSM 20300 / JCM 1318 / BCRC 11384 / CCUG 27702 / LMG 3730 / NBRC 12168 / NCIMB 10025 / NRRL B-2784 / 534).